Reading from the N-terminus, the 175-residue chain is T-cell surface glycoprotein CD3 epsilon chain (175 aa).

A signal peptide spans 1–21 (MRCEVPLPLLGLLLCVVGAAA). At 22–100 (QGGQEEFAVE…VCANCEELDT (79 aa)) the chain is on the extracellular side. A helical transmembrane segment spans residues 101–121 (FTVVGIIAADLLITLGVLILV). At 122-175 (YYFSKNKKGQSRAAAGSRPRAQKMRRPPPVPNPDYEPIRKGQRDVYAGLEHRGF) the chain is on the cytoplasmic side. Positions 133–163 (RAAAGSRPRAQKMRRPPPVPNPDYEPIRKGQ) are disordered. The ITAM domain occupies 146 to 173 (RRPPPVPNPDYEPIRKGQRDVYAGLEHR).

In terms of assembly, the TCR/CD3 complex of T-lymphocytes consists of either a TCR alpha/beta or TCR gamma/delta heterodimer coexpressed at the cell surface with the invariant subunits of CD3 labeled gamma, delta, epsilon, zeta, and eta.

It localises to the cell membrane. Functionally, the CD3 complex mediates signal transduction, resulting in T-cell activation and proliferation. Required for normal immune responses. This chain is T-cell surface glycoprotein CD3 epsilon chain (CD3E), found in Gallus gallus (Chicken).